The primary structure comprises 119 residues: Large ribosomal subunit protein uL22 (119 aa).

Belongs to the universal ribosomal protein uL22 family. In terms of assembly, part of the 50S ribosomal subunit.

In terms of biological role, this protein binds specifically to 23S rRNA; its binding is stimulated by other ribosomal proteins, e.g. L4, L17, and L20. It is important during the early stages of 50S assembly. It makes multiple contacts with different domains of the 23S rRNA in the assembled 50S subunit and ribosome. The globular domain of the protein is located near the polypeptide exit tunnel on the outside of the subunit, while an extended beta-hairpin is found that lines the wall of the exit tunnel in the center of the 70S ribosome. The chain is Large ribosomal subunit protein uL22 from Rickettsia akari (strain Hartford).